Here is a 437-residue protein sequence, read N- to C-terminus: Phosphomethylpyrimidine synthase (437 aa).

Residues Asn-69, Met-98, Tyr-127, His-163, 185–187 (SRG), 226–229 (DACR), and Glu-265 contribute to the substrate site. Position 269 (His-269) interacts with Zn(2+). Tyr-292 is a binding site for substrate. Residue His-333 coordinates Zn(2+). Positions 409, 412, and 416 each coordinate [4Fe-4S] cluster.

Belongs to the ThiC family. It depends on [4Fe-4S] cluster as a cofactor.

It catalyses the reaction 5-amino-1-(5-phospho-beta-D-ribosyl)imidazole + S-adenosyl-L-methionine = 4-amino-2-methyl-5-(phosphooxymethyl)pyrimidine + CO + 5'-deoxyadenosine + formate + L-methionine + 3 H(+). Its pathway is cofactor biosynthesis; thiamine diphosphate biosynthesis. Functionally, catalyzes the synthesis of the hydroxymethylpyrimidine phosphate (HMP-P) moiety of thiamine from aminoimidazole ribotide (AIR) in a radical S-adenosyl-L-methionine (SAM)-dependent reaction. In Clostridium botulinum (strain ATCC 19397 / Type A), this protein is Phosphomethylpyrimidine synthase.